The primary structure comprises 236 residues: MSMPFYISPEQLMADRADYARKGIARGRAVIVATCTEGIVFATENHSQALHKISEIYDRIGFAAVGKYNEFEALRVAGIRYADLRGYSYDRSDVTARALAHAYAQTLGTAFTTESKPMEVEVVVAELGHDASRDEIYHLSYDGSVAQEHGCVVIGGDQDTIDAVFRSSWEPTMSLADTLTAITQALSQPPQKDAEHTMVTPAPTYEAALLDRSRPRRTFRRLTVTDFVPSTQGTRS.

The protein belongs to the peptidase T1A family. The 20S proteasome core is composed of 14 alpha and 14 beta subunits that assemble into four stacked heptameric rings, resulting in a barrel-shaped structure. The two inner rings, each composed of seven catalytic beta subunits, are sandwiched by two outer rings, each composed of seven alpha subunits. The catalytic chamber with the active sites is on the inside of the barrel. Has a gated structure, the ends of the cylinder being occluded by the N-termini of the alpha-subunits. Is capped by the proteasome-associated ATPase, ARC.

Its subcellular location is the cytoplasm. The protein operates within protein degradation; proteasomal Pup-dependent pathway. With respect to regulation, the formation of the proteasomal ATPase ARC-20S proteasome complex, likely via the docking of the C-termini of ARC into the intersubunit pockets in the alpha-rings, may trigger opening of the gate for substrate entry. Interconversion between the open-gate and close-gate conformations leads to a dynamic regulation of the 20S proteasome proteolysis activity. Component of the proteasome core, a large protease complex with broad specificity involved in protein degradation. This is Proteasome subunit alpha from Jonesia denitrificans (strain ATCC 14870 / DSM 20603 / BCRC 15368 / CIP 55.134 / JCM 11481 / NBRC 15587 / NCTC 10816 / Prevot 55134) (Listeria denitrificans).